A 1901-amino-acid polypeptide reads, in one-letter code: A-kinase anchor protein 11 (1901 aa).

Phosphoserine occurs at positions 18, 422, 433, 444, and 448. Positions 407–443 are disordered; it reads ALPANVRKPTPRKPESPYGNLCDAPDSPRPVKASRED. 2 disordered regions span residues 843–864 and 971–993; these read NPGN…SSSK and LPVS…DSQN. 2 positions are modified to phosphothreonine: Thr-981 and Thr-1100. The segment at 1131–1153 is disordered; it reads EFAPATPPSTPHNSSVGSLSENE. Positions 1141–1153 are enriched in polar residues; the sequence is PHNSSVGSLSENE. Residues Ser-1171, Ser-1176, Ser-1177, Ser-1242, and Ser-1337 each carry the phosphoserine modification. Phosphothreonine is present on Thr-1485. Ser-1580 is modified (phosphoserine). The tract at residues 1650–1663 is PKA-RII subunit binding domain; that stretch reads LAEKIVAEAIEKAE. Residues 1708–1805 are disordered; sequence KEIEDFQSTE…HEDEVEGLGQ (98 aa). Residues 1713–1740 show a composition bias toward polar residues; it reads FQSTESVSSQQMNLSIGDDSTGSWSNLS. The segment covering 1747–1756 has biased composition (basic and acidic residues); it reads DESSSFHHLS. The span at 1757–1772 shows a compositional bias: low complexity; it reads ESNGNSSSWSSLGLEG. Over residues 1787–1801 the composition is skewed to acidic residues; sequence DGPDDKDEEHEDEVE.

The protein belongs to the AKAP110 family. Expressed in heart, brain, lung, liver, kidney, testis and ovary. Weakly expressed in skeletal muscle, pancreas and spleen.

It is found in the cytoplasm. The protein localises to the cytoskeleton. The protein resides in the microtubule organizing center. It localises to the centrosome. Its function is as follows. Binds to type II regulatory subunits of protein kinase A and anchors/targets them. This is A-kinase anchor protein 11 (AKAP11) from Homo sapiens (Human).